The following is a 123-amino-acid chain: Large ribosomal subunit protein bL12 (123 aa).

Belongs to the bacterial ribosomal protein bL12 family. In terms of assembly, homodimer. Part of the ribosomal stalk of the 50S ribosomal subunit. Forms a multimeric L10(L12)X complex, where L10 forms an elongated spine to which 2 to 4 L12 dimers bind in a sequential fashion. Binds GTP-bound translation factors.

Functionally, forms part of the ribosomal stalk which helps the ribosome interact with GTP-bound translation factors. Is thus essential for accurate translation. This Zymomonas mobilis subsp. mobilis (strain ATCC 31821 / ZM4 / CP4) protein is Large ribosomal subunit protein bL12.